The chain runs to 121 residues: UPF0145 protein SAV_4658 (121 aa).

It belongs to the UPF0145 family.

The chain is UPF0145 protein SAV_4658 from Streptomyces avermitilis (strain ATCC 31267 / DSM 46492 / JCM 5070 / NBRC 14893 / NCIMB 12804 / NRRL 8165 / MA-4680).